Reading from the N-terminus, the 350-residue chain is Glycerol-1-phosphate dehydrogenase [NAD(P)+] (350 aa).

NAD(+) is bound by residues 94–98 (GKPID) and 116–119 (TVAS). Aspartate 121 is a substrate binding site. Serine 125 lines the NAD(+) pocket. Aspartate 168 lines the substrate pocket. Positions 168 and 248 each coordinate Zn(2+). Substrate is bound at residue histidine 252. Histidine 264 lines the Zn(2+) pocket.

Belongs to the glycerol-1-phosphate dehydrogenase family. The cofactor is Zn(2+).

The protein localises to the cytoplasm. The enzyme catalyses sn-glycerol 1-phosphate + NAD(+) = dihydroxyacetone phosphate + NADH + H(+). It catalyses the reaction sn-glycerol 1-phosphate + NADP(+) = dihydroxyacetone phosphate + NADPH + H(+). The protein operates within membrane lipid metabolism; glycerophospholipid metabolism. In terms of biological role, catalyzes the NAD(P)H-dependent reduction of dihydroxyacetonephosphate (DHAP or glycerone phosphate) to glycerol 1-phosphate (G1P). The G1P thus generated is used as the glycerophosphate backbone of phospholipids in the cellular membranes of Archaea. The protein is Glycerol-1-phosphate dehydrogenase [NAD(P)+] of Halorubrum lacusprofundi (strain ATCC 49239 / DSM 5036 / JCM 8891 / ACAM 34).